Here is a 329-residue protein sequence, read N- to C-terminus: Endochitinase A (329 aa).

The signal sequence occupies residues 1-23 (MRLCKFTALSSLLFSLLLLSASA). Positions 24-65 (EQCGSQAGGARCPSGLCCSKFGWCGNTNDYCGPGNCQSQCPG) constitute a Chitin-binding type-1 domain. Intrachain disulfides connect Cys26–Cys41, Cys35–Cys47, Cys40–Cys54, and Cys59–Cys63. 4-hydroxyproline; partial is present on Pro67. 4 positions are modified to 4-hydroxyproline: Pro69, Pro71, Pro72, and Pro74. Residue Pro75 is modified to 4-hydroxyproline; partial. Disulfide bonds link Cys101/Cys163, Cys175/Cys183, and Cys282/Cys314. Residue Glu145 is the Proton donor of the active site. The propeptide at 323-329 (GLLVDTM) is removed in mature form.

It belongs to the glycosyl hydrolase 19 family. Chitinase class I subfamily. Post-translationally, the 4-hydroxyproline residues are not glycosylated in this plant vacuolar protein.

The protein resides in the vacuole. The enzyme catalyses Random endo-hydrolysis of N-acetyl-beta-D-glucosaminide (1-&gt;4)-beta-linkages in chitin and chitodextrins.. Defense against chitin-containing fungal pathogens. The polypeptide is Endochitinase A (CHN48) (Nicotiana tabacum (Common tobacco)).